The sequence spans 1863 residues: Calcineurin-binding protein 1 (1863 aa).

TPR repeat units lie at residues 30-65 (LSQTYHDGLLKLQAKDYDKARELLESILKDPIITNS), 81-116 (FLALKNLATVFLELGSSHYENALNCYLQAIDLDAKD), and 118-150 (VLWNHLGTLSCSMGLLSISRWAFEQGLLCSPNN). Residues 315 to 361 (ERESGGSVKEKEPVFSEEHPQERRSTRLERLRNQKPEKEGLEFDNSK) are disordered. TPR repeat units lie at residues 543–576 (ARYFWLSARLSILEDNKAKALEEYLRCLSLLGRE), 602–637 (IHEINLLKIDFLLENNIPEMMEKEFYSECVNLLAPL), 866–900 (INSPDGLGHDMGLPDKLCRNEVKSFLEEVHVEKNE), 955–988 (QCFFCLYGLNLRVDGSYEDELAVHKNTSRGDYQT), 990–1009 (EQCVDVFQYILPYAKASSRT), 1011–1031 (LVKLRRVLRAIKKHFSQPPDD), 1143–1183 (FESW…SQRV), 1226–1263 (VPFYDQRSVLPSKDATWTRFCENSMKHFNKAFSHRQDW), 1264–1297 (SHAFYMGKLSEKLGHSYEISLSYYKQAMTLNPSA), 1306–1339 (ASRLKLLNACGKQNLEALKVLASYCFDESIKDTA), 1377–1412 (EGVWHMLYNDSLSALGICVEGDLKHFHKARYMLAQG), and 1508–1541 (NSLRSDKRFSLCVEDLVPVAIGRYVKALVSSMSR). Positions 894-923 (VHVEKNENNKTESKKDGSEEQVGYREKEQS) are enriched in basic and acidic residues. The tract at residues 894–941 (VHVEKNENNKTESKKDGSEEQVGYREKEQSEQQSKQIPEHTEEVAEEE) is disordered. The disordered stretch occupies residues 1813 to 1840 (KMKRGASTSSVVPSVQSGGTSEPEPAPK). Polar residues predominate over residues 1818–1832 (ASTSSVVPSVQSGGT).

As to quaternary structure, component of the HIRA complex made of UBN1, UBN2, ASF1A, CABIN1 and HIRA. Expressed at low levels in seedlings.

Its subcellular location is the nucleus. Functionally, may be required for replication-independent chromatin assembly. This Arabidopsis thaliana (Mouse-ear cress) protein is Calcineurin-binding protein 1.